The chain runs to 172 residues: Diphosphoinositol polyphosphate phosphohydrolase 1 (172 aa).

N-acetylmethionine is present on Met-1. Substrate-binding positions include Arg-10, 18-20 (KKR), and 39-41 (SSR). In terms of domain architecture, Nudix hydrolase spans 17 to 144 (YKKRAACLCF…VQASYFETLR (128 aa)). Mg(2+) contacts are provided by Gly-50 and Glu-66. The short motif at 51–72 (GGMEPEEEPGTAAVREVCEEAG) is the Nudix box element. The active-site Proton acceptor is the Glu-69. Mg(2+) is bound at residue Glu-70. Substrate contacts are provided by residues 89-91 (RKH), Arg-115, and Lys-133.

The protein belongs to the Nudix hydrolase family. DIPP subfamily. Monomer. Mg(2+) is required as a cofactor. The cofactor is Mn(2+). Zn(2+) serves as cofactor.

It localises to the cytoplasm. The protein localises to the nucleus. It catalyses the reaction diphospho-myo-inositol polyphosphate + H2O = myo-inositol polyphosphate + phosphate.. The catalysed reaction is 5-diphospho-1D-myo-inositol 1,2,3,4,6-pentakisphosphate + H2O = 1D-myo-inositol hexakisphosphate + phosphate + H(+). The enzyme catalyses 3,5-bis(diphospho)-1D-myo-inositol 1,2,4,6-tetrakisphosphate + H2O = 3-diphospho-1D-myo-inositol 1,2,4,5,6-pentakisphosphate + phosphate + 2 H(+). It carries out the reaction [phosphate](n+1) + n H2O = (n+1) phosphate + n H(+). It catalyses the reaction P(1),P(5)-bis(5'-adenosyl) pentaphosphate + H2O = ADP + ATP + 2 H(+). The catalysed reaction is P(1),P(6)-bis(5'-adenosyl) hexaphosphate + H2O = 2 ATP + 2 H(+). The enzyme catalyses P(1),P(4)-bis(5'-adenosyl) tetraphosphate + H2O = AMP + ATP + 2 H(+). It carries out the reaction a 5'-end (N(7)-methyl 5'-triphosphoguanosine)-ribonucleoside in mRNA + H2O = N(7)-methyl-GMP + a 5'-end diphospho-ribonucleoside in mRNA + 2 H(+). It catalyses the reaction a 5'-end (N(7)-methyl 5'-triphosphoguanosine)-ribonucleoside in mRNA + H2O = N(7)-methyl-GDP + a 5'-end phospho-ribonucleoside in mRNA + 2 H(+). Its function is as follows. Cleaves a beta-phosphate from the diphosphate groups in PP-InsP5 (diphosphoinositol pentakisphosphate) and [PP]2-InsP4 (bisdiphosphoinositol tetrakisphosphate), suggesting that it may play a role in signal transduction. InsP6 (inositol hexakisphosphate) is not a substrate. Also able to catalyze the hydrolysis of dinucleoside oligophosphates, with diadenosine 5',5'''-P1,P6-hexaphosphate (Ap6A) and diadenosine 5',5'''- P1,P5-pentaphosphate (Ap5A) being the preferred substrates. The major reaction products are ADP and p4a from Ap6A and ADP and ATP from Ap5A. Also able to hydrolyze 5- phosphoribose 1-diphosphate. Acts as a decapping enzyme that can hydrolyze both monomethylated and unmethylated capped RNAs. Hydrolyzes monomethylated capped RNA after both the alpha- and beta-phosphates generating m7GMP + ppRNA and m7GDP + pRNA. Modulates the stability of a subset of mRNAs implicated in cell motility. Divalent cations zinc, magnesium and manganese determine its substrate specificity. Exhibits diphosphoinositol polyphosphate phosphohydrolase in the presence of magnesium ions, diadenosine hexaphosphate hydrolase activity in the presence of manganese ions and endopolyphosphatase activity in the presence of zinc ions. Plays an important role in limiting DNA damage and maintaining cell survival upon oxidative stress via its endopolyphosphatase activity. The chain is Diphosphoinositol polyphosphate phosphohydrolase 1 from Bos taurus (Bovine).